The chain runs to 403 residues: MEKQSPAQTISLFVLLALMFVLVCMLFVPYLTVLLWSSILAILLSPCYRALCARIDMHAFTRTRHLVSHMNGEDGCTAAITRATRFQKKMLAAVFSLVITLLVTTVFFFIAISLFGQGKLLFDKLSLFFREYDLFEGAKQRSFTALIFKLSRGTVDISTLNVEEHLLRFFGKHVESVFVYTQIFVKNIARAALSTLFFSFTLYFFFLDGEHLSCLLIAALPLRKRASAQLLEKCKEATRHLFKGLFSIAFYQTCVAFVFYGIFRVEGPMALAMLTFFASFLPLVGCACVWLPVGISIGFTSGWMRGTLFLFVAGSSITIIDSFLRPLLLQNKMRIHPLLIFFSMLGGVQTFGFNGMVLGPILVILLFTVIDLTHDGESHYTSIFHDPPAAGVHAQSIHRQGKK.

A run of 8 helical transmembrane segments spans residues 10-30 (ISLFVLLALMFVLVCMLFVPY), 31-51 (LTVLLWSSILAILLSPCYRAL), 92-112 (AAVFSLVITLLVTTVFFFIAI), 202-222 (LYFFFLDGEHLSCLLIAALPL), 243-263 (KGLFSIAFYQTCVAFVFYGIF), 271-291 (LAMLTFFASFLPLVGCACVWL), 293-313 (VGISIGFTSGWMRGTLFLFVA), and 350-370 (TFGFNGMVLGPILVILLFTVI).

It belongs to the autoinducer-2 exporter (AI-2E) (TC 2.A.86) family.

It is found in the cell membrane. In Treponema pallidum (strain Nichols), this protein is Putative transport protein TP_0553.